Reading from the N-terminus, the 218-residue chain is tRNA (cytidine(56)-2'-O)-methyltransferase (218 aa).

Residues Leu81, 106–110 (GAEKV), and 124–131 (IGNQPHSE) contribute to the S-adenosyl-L-methionine site. Residues 170 to 218 (KVGEEGPSGGAPGVRAERGRGGRGEGVQGADEVRGHKRGATDRDLGDET) form a disordered region. A compositionally biased stretch (basic and acidic residues) spans 200 to 218 (DEVRGHKRGATDRDLGDET).

The protein belongs to the aTrm56 family. In terms of assembly, homodimer.

The protein localises to the cytoplasm. It carries out the reaction cytidine(56) in tRNA + S-adenosyl-L-methionine = 2'-O-methylcytidine(56) in tRNA + S-adenosyl-L-homocysteine + H(+). Specifically catalyzes the AdoMet-dependent 2'-O-ribose methylation of cytidine at position 56 in tRNAs. This chain is tRNA (cytidine(56)-2'-O)-methyltransferase, found in Ignicoccus hospitalis (strain KIN4/I / DSM 18386 / JCM 14125).